The chain runs to 346 residues: Biotin synthase (346 aa).

The region spanning 38–256 is the Radical SAM core domain; it reads QQVQVSTLLS…IAVARIMMPT (219 aa). C53, C57, and C60 together coordinate [4Fe-4S] cluster. 4 residues coordinate [2Fe-2S] cluster: C97, C128, C188, and R260.

This sequence belongs to the radical SAM superfamily. Biotin synthase family. Homodimer. It depends on [4Fe-4S] cluster as a cofactor. The cofactor is [2Fe-2S] cluster.

The enzyme catalyses (4R,5S)-dethiobiotin + (sulfur carrier)-SH + 2 reduced [2Fe-2S]-[ferredoxin] + 2 S-adenosyl-L-methionine = (sulfur carrier)-H + biotin + 2 5'-deoxyadenosine + 2 L-methionine + 2 oxidized [2Fe-2S]-[ferredoxin]. It functions in the pathway cofactor biosynthesis; biotin biosynthesis; biotin from 7,8-diaminononanoate: step 2/2. Catalyzes the conversion of dethiobiotin (DTB) to biotin by the insertion of a sulfur atom into dethiobiotin via a radical-based mechanism. The sequence is that of Biotin synthase from Salmonella agona (strain SL483).